We begin with the raw amino-acid sequence, 838 residues long: Serine/threonine-protein phosphatase 4 regulatory subunit 3 (838 aa).

Disordered stretches follow at residues 452–482 (NNCNGNSAVKAGESNGAESPIAPPGSRSPSR) and 745–838 (AINK…SESS). Polar residues predominate over residues 747–761 (NKQQDNNGERNTTTG). A compositionally biased stretch (acidic residues) spans 783-792 (SDGENNENNE).

In terms of assembly, regulatory subunit 3 (R3) of the histone H2A phosphatase complex (HTP-C) consisting of PPH3, PSY2 and PSY4.

It localises to the nucleus. Functionally, core regulatory subunit of the histone H2A phosphatase complex, which dephosphorylates H2AS128ph (gamma-H2A) that has been displaced from sites of DNA lesions in the double-stranded DNA break repair process. Dephosphorylation is necessary for efficient recovery from the DNA damage checkpoint. The sequence is that of Serine/threonine-protein phosphatase 4 regulatory subunit 3 (PSY2) from Eremothecium gossypii (strain ATCC 10895 / CBS 109.51 / FGSC 9923 / NRRL Y-1056) (Yeast).